Reading from the N-terminus, the 604-residue chain is MPTDQVCLGRKRPLPSCPNPLFLQWLTELRDSAKEKGLKTHFVYQKAINSLKKYPLPLKNGKEAKILQNFGDGICKILDERLQKHYRENGSDAAVHLASSKQMEESQKEPSGNFSEHTKLTQKEVRKEKGAKKKREYVPQKRSGGYAVLLTLYRHMQMPGSKGFMFRNELQTEAQPLCEKSFTVPDLGSKYTAWSSVSTLIQKELVVKTHNPARYSLTDQGLSLAEKLDSEETGTRHEDVDSQDGQNVVDLTLEEEDEDEEKESWSSERPAVALPVNQARGLMSESDPMGKSQTSETGRTAMGWHLSPGSYDIVLCVDLCETTGGSSVRKQELVKELQRNSVTFDVRKLNVGDFLWVARERVTPVPGQLRPPVGKELVLDYIIERKRMDDLCGSIIDGRFREQKFRLKRCGLRKPIYLVEECGSAAAHLSIPESTLQQAIVNTQVVDGFFVKRVQDAKESAAYLTIMTRYLQKLYQNCTLLCRSRELEGDGEAESEKMVANLSCSLMAFTEFNYGAIKNKCQTVREVFARQLMQISGVSGDKAAAVLKHYSTVSSLLQAYDKCSSETEKEKLLSSVKYGKLKRNLGPALSRTIYQLYCTRGPLS.

Disordered stretches follow at residues 93–138 (AAVH…REYV), 227–248 (KLDSEETGTRHEDVDSQDGQNV), and 253–272 (LEEEDEDEEKESWSSERPAV). Composition is skewed to basic and acidic residues over residues 116-128 (EHTKLTQKEVRKE) and 227-240 (KLDSEETGTRHEDV). The tract at residues 138–254 (VPQKRSGGYA…GQNVVDLTLE (117 aa)) is winged helix domain (WHD); critical for endonuclease activity. A compositionally biased stretch (acidic residues) spans 253 to 262 (LEEEDEDEEK). An ERCC4 domain is found at 314–423 (VLCVDLCETT…KPIYLVEECG (110 aa)). Catalysis depends on residues Asp-318, Glu-321, and Asp-353. Mg(2+)-binding residues include Asp-318, Glu-321, Asp-353, Glu-384, and Arg-385. The tract at residues 524–598 (VREVFARQLM…LSRTIYQLYC (75 aa)) is helix-hairpin-helix (2HhH); involved in DNA recognition and bending.

The protein belongs to the XPF family. As to quaternary structure, part of the heterodimeric DNA structure-specific endonuclease complex MUS81-EME1. Part of the heterodimeric DNA structure-specific endonuclease complex MUS81-EME2. Requires Mg(2+) as cofactor.

The protein localises to the nucleus. The protein resides in the nucleolus. Catalytic subunit of two functionally distinct, structure-specific, heterodimeric DNA endonucleases MUS81-EME1 and MUS81-EME2 that are involved in the maintenance of genome stability. Both endonucleases have essentially the same substrate specificity though MUS81-EME2 is more active than its MUS81-EME1 counterpart. Both cleave 3'-flaps and nicked Holliday junctions, and exhibit limited endonuclease activity with 5' flaps and nicked double-stranded DNAs. MUS81-EME2 which is active during the replication of DNA is more specifically involved in replication fork processing. Replication forks frequently encounter obstacles to their passage, including DNA base lesions, DNA interstrand cross-links, difficult-to-replicate sequences, transcription bubbles, or tightly bound proteins. One mechanism for the restart of a stalled replication fork involves nucleolytic cleavage mediated by the MUS81-EME2 endonuclease. By acting upon the stalled fork, MUS81-EME2 generates a DNA double-strand break (DSB) that can be repaired by homologous recombination, leading to the restoration of an active fork. MUS81-EME2 could also function in telomere maintenance. MUS81-EME1, on the other hand, is active later in the cell cycle and functions in the resolution of mitotic recombination intermediates including the Holliday junctions, the four-way DNA intermediates that form during homologous recombination. The chain is Structure-specific endonuclease subunit MUS81 (mus81) from Danio rerio (Zebrafish).